We begin with the raw amino-acid sequence, 324 residues long: dITP/XTP pyrophosphatase (324 aa).

The tract at residues 1–126 is unknown; that stretch reads MTKSIFEYKD…SDNKSDFGDV (126 aa). The NTP pyrophosphatase stretch occupies residues 127–324; the sequence is LLIATRNEGK…EVFPAWQNKQ (198 aa). A substrate-binding site is contributed by 131–136; sequence TRNEGK. Asp193 acts as the Proton acceptor in catalysis. Asp193 is a binding site for Mg(2+). Substrate is bound by residues Ser194, 277–280, Lys300, and 305–306; these read FGYD and HR.

The protein belongs to the HAM1 NTPase family. Homodimer. It depends on Mg(2+) as a cofactor.

The enzyme catalyses XTP + H2O = XMP + diphosphate + H(+). It catalyses the reaction dITP + H2O = dIMP + diphosphate + H(+). The catalysed reaction is ITP + H2O = IMP + diphosphate + H(+). Pyrophosphatase that catalyzes the hydrolysis of nucleoside triphosphates to their monophosphate derivatives, with a high preference for the non-canonical purine nucleotides XTP (xanthosine triphosphate), dITP (deoxyinosine triphosphate) and ITP. Seems to function as a house-cleaning enzyme that removes non-canonical purine nucleotides from the nucleotide pool, thus preventing their incorporation into DNA/RNA and avoiding chromosomal lesions. This Streptococcus thermophilus (strain CNRZ 1066) protein is dITP/XTP pyrophosphatase.